A 134-amino-acid chain; its full sequence is Profilin-3 (134 aa).

Cysteines 13 and 118 form a disulfide. Positions 84–100 match the Involved in PIP2 interaction motif; sequence AVIRGKKGSGGITIKKT. Thr114 bears the Phosphothreonine mark.

The protein belongs to the profilin family. In terms of assembly, occurs in many kinds of cells as a complex with monomeric actin in a 1:1 ratio. Phosphorylated by MAP kinases.

It is found in the cytoplasm. Its subcellular location is the cytoskeleton. Functionally, binds to actin and affects the structure of the cytoskeleton. At high concentrations, profilin prevents the polymerization of actin, whereas it enhances it at low concentrations. This is Profilin-3 from Olea europaea (Common olive).